A 94-amino-acid chain; its full sequence is Co-chaperonin GroES (94 aa).

This sequence belongs to the GroES chaperonin family. As to quaternary structure, heptamer of 7 subunits arranged in a ring. Interacts with the chaperonin GroEL.

The protein localises to the cytoplasm. In terms of biological role, together with the chaperonin GroEL, plays an essential role in assisting protein folding. The GroEL-GroES system forms a nano-cage that allows encapsulation of the non-native substrate proteins and provides a physical environment optimized to promote and accelerate protein folding. GroES binds to the apical surface of the GroEL ring, thereby capping the opening of the GroEL channel. In Clostridium perfringens (strain SM101 / Type A), this protein is Co-chaperonin GroES.